A 412-amino-acid polypeptide reads, in one-letter code: Lipid droplet organization protein LDO45 (412 aa).

The Cytoplasmic portion of the chain corresponds to 1 to 170 (MAARNRRKNN…TVEKLNALQN (170 aa)). A helical membrane pass occupies residues 171–191 (SLYEVFWIIFIYLNYWFPNVG). Residues 192 to 247 (DYVSNTFGQQDSIIIRISLSKSHFRALREKSSQKVQQAVKNIYFCFQEKPYLTAFK) are Lumenal-facing. Residues 248 to 268 (VSFAIGLVIPCSLLFLIMVST) form a helical membrane-spanning segment. Topologically, residues 269 to 271 (ATF) are cytoplasmic. Residues 272–292 (FFFVYLTLFVVIGFFSSLFII) form a helical membrane-spanning segment. Position 293 (proline 293) is a topological domain, lumenal. The chain crosses the membrane as a helical span at residues 294–314 (LLGISFVFAIGVVSFGFCSNM). Over 315 to 412 (SFKMAQLIYV…NKAGNKFQLS (98 aa)) the chain is Cytoplasmic. The disordered stretch occupies residues 347-374 (QEPQEPLSTLRPVSNPTIPSPLRQTARP). The span at 357-373 (RPVSNPTIPSPLRQTAR) shows a compositional bias: polar residues.

Interacts specifically with the seipin complex FLD1-LDB16. Only a fraction appears to associate with the seipin core components, suggesting that it may be an ancillary subunit of the complex.

It is found in the endoplasmic reticulum membrane. The protein resides in the lipid droplet. Functionally, involved in lipid droplet (LD) organization. Modulates triglyceride (TAG) storage by reducing DGA1 LD localization. Promotes LD targeting of some proteins, including PDR16. This is Lipid droplet organization protein LDO45 from Saccharomyces cerevisiae (strain ATCC 204508 / S288c) (Baker's yeast).